A 393-amino-acid chain; its full sequence is RNA pseudouridine synthase 7 (393 aa).

The S4 RNA-binding domain occupies 49–118 (KTIVDLFTDE…GDITILQNEA (70 aa)). Residue D162 is part of the active site.

The protein belongs to the pseudouridine synthase RluA family.

It carries out the reaction a uridine in RNA = a pseudouridine in RNA. This Oryza sativa subsp. japonica (Rice) protein is RNA pseudouridine synthase 7.